A 370-amino-acid polypeptide reads, in one-letter code: 3-dehydroquinate synthase (370 aa).

NAD(+) is bound by residues 112-116, 136-137, lysine 149, lysine 158, and 176-179; these read GVIGD, TT, and TLKT. Zn(2+) is bound by residues glutamate 191, histidine 256, and histidine 273.

This sequence belongs to the sugar phosphate cyclases superfamily. Dehydroquinate synthase family. It depends on Co(2+) as a cofactor. Zn(2+) is required as a cofactor. NAD(+) serves as cofactor.

It is found in the cytoplasm. The enzyme catalyses 7-phospho-2-dehydro-3-deoxy-D-arabino-heptonate = 3-dehydroquinate + phosphate. It functions in the pathway metabolic intermediate biosynthesis; chorismate biosynthesis; chorismate from D-erythrose 4-phosphate and phosphoenolpyruvate: step 2/7. Functionally, catalyzes the conversion of 3-deoxy-D-arabino-heptulosonate 7-phosphate (DAHP) to dehydroquinate (DHQ). In Prochlorococcus marinus (strain MIT 9211), this protein is 3-dehydroquinate synthase.